The primary structure comprises 186 residues: Pyridoxal 5'-phosphate synthase subunit PdxT (186 aa).

Gly-46–Ser-48 lines the L-glutamine pocket. Cys-78 acts as the Nucleophile in catalysis. L-glutamine contacts are provided by residues Arg-105 and Ile-134 to Arg-135. Active-site charge relay system residues include His-170 and Glu-172.

It belongs to the glutaminase PdxT/SNO family. In the presence of PdxS, forms a dodecamer of heterodimers. Only shows activity in the heterodimer.

It catalyses the reaction aldehydo-D-ribose 5-phosphate + D-glyceraldehyde 3-phosphate + L-glutamine = pyridoxal 5'-phosphate + L-glutamate + phosphate + 3 H2O + H(+). The catalysed reaction is L-glutamine + H2O = L-glutamate + NH4(+). Its pathway is cofactor biosynthesis; pyridoxal 5'-phosphate biosynthesis. Its function is as follows. Catalyzes the hydrolysis of glutamine to glutamate and ammonia as part of the biosynthesis of pyridoxal 5'-phosphate. The resulting ammonia molecule is channeled to the active site of PdxS. This Clostridium acetobutylicum (strain ATCC 824 / DSM 792 / JCM 1419 / IAM 19013 / LMG 5710 / NBRC 13948 / NRRL B-527 / VKM B-1787 / 2291 / W) protein is Pyridoxal 5'-phosphate synthase subunit PdxT.